Consider the following 480-residue polypeptide: NADH-quinone oxidoreductase subunit N (480 aa).

Helical transmembrane passes span 13-33, 41-61, 81-101, 107-127, 132-152, 167-187, 212-232, 245-265, 276-296, 314-334, 373-393, 413-433, and 454-474; these read ISPM…QFLI, PLWV…YHTT, VWLS…APPF, TLFP…MFLT, LIVI…MIGM, FLLG…LYGG, LGLG…PFHS, ITGF…IILF, VWKY…NIVA, AGYI…YYLF, ALAL…IGFW, LLFG…KITI, and PTLG…WIFF.

Belongs to the complex I subunit 2 family. As to quaternary structure, NDH-1 is composed of 14 different subunits. Subunits NuoA, H, J, K, L, M, N constitute the membrane sector of the complex.

The protein resides in the cell inner membrane. It carries out the reaction a quinone + NADH + 5 H(+)(in) = a quinol + NAD(+) + 4 H(+)(out). Functionally, NDH-1 shuttles electrons from NADH, via FMN and iron-sulfur (Fe-S) centers, to quinones in the respiratory chain. The immediate electron acceptor for the enzyme in this species is believed to be ubiquinone. Couples the redox reaction to proton translocation (for every two electrons transferred, four hydrogen ions are translocated across the cytoplasmic membrane), and thus conserves the redox energy in a proton gradient. This chain is NADH-quinone oxidoreductase subunit N, found in Leptospira biflexa serovar Patoc (strain Patoc 1 / Ames).